Here is a 468-residue protein sequence, read N- to C-terminus: Glutamate--tRNA ligase (468 aa).

Positions 12–22 (PSPTGFIHLGN) match the 'HIGH' region motif. Positions 244–248 (KMSKR) match the 'KMSKS' region motif. An ATP-binding site is contributed by K247.

This sequence belongs to the class-I aminoacyl-tRNA synthetase family. Glutamate--tRNA ligase type 1 subfamily. In terms of assembly, monomer.

Its subcellular location is the cytoplasm. The catalysed reaction is tRNA(Glu) + L-glutamate + ATP = L-glutamyl-tRNA(Glu) + AMP + diphosphate. Its function is as follows. Catalyzes the attachment of glutamate to tRNA(Glu) in a two-step reaction: glutamate is first activated by ATP to form Glu-AMP and then transferred to the acceptor end of tRNA(Glu). The polypeptide is Glutamate--tRNA ligase (Polynucleobacter asymbioticus (strain DSM 18221 / CIP 109841 / QLW-P1DMWA-1) (Polynucleobacter necessarius subsp. asymbioticus)).